The sequence spans 447 residues: Tyrosine aminotransferase (447 aa).

Lysine 273 is subject to N6-(pyridoxal phosphate)lysine. Phosphoserine is present on serine 441.

Belongs to the class-I pyridoxal-phosphate-dependent aminotransferase family. As to quaternary structure, homodimer. Pyridoxal 5'-phosphate serves as cofactor.

The catalysed reaction is L-tyrosine + 2-oxoglutarate = 3-(4-hydroxyphenyl)pyruvate + L-glutamate. It functions in the pathway amino-acid degradation; L-phenylalanine degradation; acetoacetate and fumarate from L-phenylalanine: step 2/6. Transaminase involved in tyrosine breakdown. Converts tyrosine to p-hydroxyphenylpyruvate. Can catalyze the reverse reaction, using glutamic acid, with 2-oxoglutarate as cosubstrate (in vitro). Has much lower affinity and transaminase activity for phenylalanine. The chain is Tyrosine aminotransferase (TAT) from Bos taurus (Bovine).